Reading from the N-terminus, the 159-residue chain is Transcriptional repressor NrdR (159 aa).

Residues 3–34 fold into a zinc finger; it reads CPFCRHDDTQVVDSRVSEDGAAIRRRRRCSAC. The region spanning 49-139 is the ATP-cone domain; it reads PAVVKKDGSR…VYRRFEDVSE (91 aa).

Belongs to the NrdR family. Zn(2+) is required as a cofactor.

Negatively regulates transcription of bacterial ribonucleotide reductase nrd genes and operons by binding to NrdR-boxes. This chain is Transcriptional repressor NrdR, found in Burkholderia pseudomallei (strain 1106a).